A 354-amino-acid polypeptide reads, in one-letter code: Probable L-ascorbate-6-phosphate lactonase UlaG (354 aa).

It belongs to the UlaG family. A divalent metal cation serves as cofactor.

It localises to the cytoplasm. It catalyses the reaction L-ascorbate 6-phosphate + H2O = 3-dehydro-L-gulonate 6-phosphate. It participates in cofactor degradation; L-ascorbate degradation; D-xylulose 5-phosphate from L-ascorbate: step 1/4. Functionally, probably catalyzes the hydrolysis of L-ascorbate-6-P into 3-keto-L-gulonate-6-P. Is essential for L-ascorbate utilization under anaerobic conditions. This Salmonella gallinarum (strain 287/91 / NCTC 13346) protein is Probable L-ascorbate-6-phosphate lactonase UlaG.